Here is a 320-residue protein sequence, read N- to C-terminus: Tetraacyldisaccharide 4'-kinase (320 aa).

Residue 53–60 (SVGGNGKT) coordinates ATP.

It belongs to the LpxK family.

It carries out the reaction a lipid A disaccharide + ATP = a lipid IVA + ADP + H(+). Its pathway is glycolipid biosynthesis; lipid IV(A) biosynthesis; lipid IV(A) from (3R)-3-hydroxytetradecanoyl-[acyl-carrier-protein] and UDP-N-acetyl-alpha-D-glucosamine: step 6/6. Its function is as follows. Transfers the gamma-phosphate of ATP to the 4'-position of a tetraacyldisaccharide 1-phosphate intermediate (termed DS-1-P) to form tetraacyldisaccharide 1,4'-bis-phosphate (lipid IVA). The sequence is that of Tetraacyldisaccharide 4'-kinase from Psychromonas ingrahamii (strain DSM 17664 / CCUG 51855 / 37).